The primary structure comprises 158 residues: Small ribosomal subunit protein uS9 (158 aa).

Belongs to the universal ribosomal protein uS9 family.

This is Small ribosomal subunit protein uS9 from Nitrobacter hamburgensis (strain DSM 10229 / NCIMB 13809 / X14).